The sequence spans 196 residues: Putative 3-methyladenine DNA glycosylase (196 aa).

This sequence belongs to the DNA glycosylase MPG family.

The sequence is that of Putative 3-methyladenine DNA glycosylase from Bacillus velezensis (strain DSM 23117 / BGSC 10A6 / LMG 26770 / FZB42) (Bacillus amyloliquefaciens subsp. plantarum).